Here is a 329-residue protein sequence, read N- to C-terminus: Glyceraldehyde-3-phosphate dehydrogenase 1 (329 aa).

NAD(+)-binding positions include 11–12 (RI), Asp-33, and Glu-77. Ser-148 carries the phosphoserine modification. 148–150 (SCT) serves as a coordination point for D-glyceraldehyde 3-phosphate. The Nucleophile role is filled by Cys-149. Ser-177 carries the post-translational modification Phosphoserine. Thr-179 is a binding site for D-glyceraldehyde 3-phosphate. Ser-200 carries the phosphoserine modification. D-glyceraldehyde 3-phosphate is bound by residues 208 to 209 (TG) and Arg-231. Residue Asn-313 coordinates NAD(+).

It belongs to the glyceraldehyde-3-phosphate dehydrogenase family. As to quaternary structure, homotetramer.

Its subcellular location is the cytoplasm. The enzyme catalyses D-glyceraldehyde 3-phosphate + phosphate + NAD(+) = (2R)-3-phospho-glyceroyl phosphate + NADH + H(+). The protein operates within carbohydrate degradation; glycolysis; pyruvate from D-glyceraldehyde 3-phosphate: step 1/5. The polypeptide is Glyceraldehyde-3-phosphate dehydrogenase 1 (Kluyveromyces marxianus (Yeast)).